A 643-amino-acid polypeptide reads, in one-letter code: Alpha-dioxygenase PIOX (643 aa).

His-167 serves as the catalytic Proton acceptor. Asp-168 is a Ca(2+) binding site. Residue His-172 coordinates heme b. Residues Thr-220, Trp-222, Asp-224, and Ser-226 each coordinate Ca(2+). Heme b-binding residues include His-392, Arg-489, and Arg-493.

It belongs to the peroxidase family. The cofactor is heme b. It depends on Ca(2+) as a cofactor.

The enzyme catalyses a 1,2-saturated fatty acid + O2 = a (2R)-2-hydroperoxy fatty acid. The catalysed reaction is (9Z,12Z,15Z)-octadecatrienoate + O2 = (R)-2-hydroperoxy-(9Z,12Z,15Z)-octadecatrienoate. It catalyses the reaction (9Z,12Z)-octadecadienoate + O2 = (2R,9Z,12Z)-2-hydroperoxyoctadecadienoate. Functionally, alpha-dioxygenase that catalyzes the primary oxygenation step of a variety of 14-20 carbon fatty acids, containing up to three unsaturated bonds, into their corresponding 2R-hydroperoxides. Involved in the production of oxylipins that function in cell signaling, wound healing, and protection from infection. The protein is Alpha-dioxygenase PIOX of Nicotiana tabacum (Common tobacco).